Consider the following 274-residue polypeptide: Large ribosomal subunit protein uL2 (274 aa).

2 disordered regions span residues 37 to 60 (QHQK…GHKH) and 224 to 252 (AMNP…WGNL). Over residues 50 to 60 (TTRHKGGGHKH) the composition is skewed to basic residues. Positions 229–246 (DHPHGGGEGRTGEGRHAV) are enriched in basic and acidic residues.

This sequence belongs to the universal ribosomal protein uL2 family. Part of the 50S ribosomal subunit. Forms a bridge to the 30S subunit in the 70S ribosome.

Functionally, one of the primary rRNA binding proteins. Required for association of the 30S and 50S subunits to form the 70S ribosome, for tRNA binding and peptide bond formation. It has been suggested to have peptidyltransferase activity; this is somewhat controversial. Makes several contacts with the 16S rRNA in the 70S ribosome. The protein is Large ribosomal subunit protein uL2 of Paracidovorax citrulli (strain AAC00-1) (Acidovorax citrulli).